Here is a 325-residue protein sequence, read N- to C-terminus: MACGEFSLIARYFDRVRSSRLDVELGIGDDCALLNIPEKQTLAISTDTLVAGNHFLPDIDPADLAYKALAVNLSDLAAMGADPAWLTLALTLPDVDEAWLESFSDSLFDLLNYYDMQLIGGDTTRGPLSMTLGIHGFVPMGRALTRSGAKPGDWIYVTGTPGDSAAGLAILQNRLQVADAKDADYLIKRHLRPSPRILQGQALRDLANSAIDLSDGLISDLGHIVKASDCGARIDLALLPFSDALSRHVVPEQALRWALSGGEDYELCFTVPELNRGALDVALGHLGVPFTCIGQMTADIEGLCFIRDGEPVTLDWKGYDHFATP.

Residues Asp30, Ser45, Thr46, and Asp47 each coordinate Mg(2+). His54 contacts substrate. Mg(2+) is bound by residues Asp75 and Asp122. Residues 121-122 and Arg146 contribute to the ATP site; that span reads GD. A Mg(2+)-binding site is contributed by Asp212. An ATP-binding site is contributed by Ser214. Asp215 contributes to the Mg(2+) binding site. Substrate contacts are provided by Glu263 and Tyr319.

The protein belongs to the thiamine-monophosphate kinase family.

It carries out the reaction thiamine phosphate + ATP = thiamine diphosphate + ADP. It functions in the pathway cofactor biosynthesis; thiamine diphosphate biosynthesis; thiamine diphosphate from thiamine phosphate: step 1/1. In terms of biological role, catalyzes the ATP-dependent phosphorylation of thiamine-monophosphate (TMP) to form thiamine-pyrophosphate (TPP), the active form of vitamin B1. The polypeptide is Thiamine-monophosphate kinase (Escherichia coli O157:H7).